Reading from the N-terminus, the 602-residue chain is Spermidine-citrate ligase (602 aa).

ATP-binding positions include 286 to 288, lysine 300, and arginine 312; that span reads SLR.

This sequence belongs to the IucA/IucC family.

The enzyme catalyses spermidine + citrate + ATP = N(8)-citryl-spermidine + AMP + diphosphate + H(+). It functions in the pathway siderophore biosynthesis; petrobactin biosynthesis. Its function is as follows. Involved in the biosynthesis of petrobactin, a catecholate siderophore that functions in both iron acquisition and virulence. Catalyzes the ATP-dependent condensation of citric acid and spermidine to form N(8)-citryl-spermidine. It can also catalyze the condensation of several di- and triamine analogs of spermidine with citric acid and the condensation of the citric acid analog tricarballylic acid with spermidine. Required for growth in iron-depleted medium and for full virulence in a mouse model of infection. The polypeptide is Spermidine-citrate ligase (Bacillus anthracis).